The chain runs to 39 residues: Phosphate starvation-inducible protein 1 (39 aa).

It localises to the cell outer membrane. The sequence is that of Phosphate starvation-inducible protein 1 from Pseudomonas fluorescens.